We begin with the raw amino-acid sequence, 103 residues long: Large ribosomal subunit protein uL24 (103 aa).

It belongs to the universal ribosomal protein uL24 family. Part of the 50S ribosomal subunit.

In terms of biological role, one of two assembly initiator proteins, it binds directly to the 5'-end of the 23S rRNA, where it nucleates assembly of the 50S subunit. Functionally, one of the proteins that surrounds the polypeptide exit tunnel on the outside of the subunit. The protein is Large ribosomal subunit protein uL24 of Rhizobium meliloti (strain 1021) (Ensifer meliloti).